Reading from the N-terminus, the 169-residue chain is Myelin basic protein (169 aa).

A1 is modified (N-acetylalanine). The disordered stretch occupies residues 1–114; the sequence is AAQKRPSQRS…GRGLSLSRFS (114 aa). S7 is subject to Phosphoserine; in C5 and C6. Residue S10 is modified to Phosphoserine. The residue at position 12 (Y12) is a Phosphotyrosine. S17 bears the Phosphoserine mark. T18 bears the Phosphothreonine mark. R23 is modified (citrulline; in form C8b). A Citrulline modification is found at R29. T33 is modified (phosphothreonine). A Phosphoserine modification is found at S38. At R41 the chain carries Citrulline; alternate. Omega-N-methylarginine; alternate is present on R41. The segment at 43-87 is induces experimental autoimmune encephalomyelitis (EAE) 1; it reads FGSDRGAPKRGSGKDGHHAARTTHYGSLPQKAQGHRPQDENPVVH. Position 47 is a citrulline; in form C8b (R47). R47 carries the post-translational modification Omega-N-methylarginine. S54 carries the post-translational modification Phosphoserine; in C4, C5 and C6. Residue R63 is modified to Citrulline. Residue T65 is modified to Phosphothreonine. A Phosphotyrosine modification is found at Y67. T94 carries the post-translational modification Phosphothreonine. R96 is subject to Citrulline; in form C2, C3, C8a and C8b. T97 bears the Phosphothreonine; by MAPK; in C3, C4, C5 and C6 mark. Q102 bears the Deamidated glutamine; in form C5 mark. R106 is modified (citrulline; alternate). R106 bears the Omega-N-methylarginine; alternate mark. R106 is modified (symmetric dimethylarginine; alternate). Citrulline is present on R112. The residue at position 114 (S114) is a Phosphoserine. The interval 114-122 is induces experimental autoimmune encephalomyelitis (EAE) 2; the sequence is SWGAEGQKP. Residue Q120 is modified to Deamidated glutamine; in form C3. Residue K121 is modified to N6-acetyllysine. R129 carries the citrulline modification. The segment at 133–169 is disordered; sequence YKSAHKGLKGHDAQGTLSKIFKLGGRDSRSGSPMARR. Q146 bears the Deamidated glutamine; in form C2 mark. R158 is modified (citrulline). S160 is modified (phosphoserine; in C4 and C6). R161 bears the Citrulline; in form C3 mark. Phosphoserine; in form C3, C5 and C6 is present on S164. R168 and R169 each carry citrulline.

Belongs to the myelin basic protein family. As to quaternary structure, homodimer; self-associates in the presence of lysolipid. At least 6 charge isomers; C1 (the most cationic and least modified form), C2, C3, C4, C5 and C6 (the least cationic form); are produced as a result of optional post-translational modifications, such as phosphorylation of serine or threonine residues, deamidation of glutamine or asparagine residues, citrullination and methylation of arginine residues. Post-translationally, phosphorylated by TAOK2, VRK2, MAPK11, MAPK12, MAPK14 and MINK1. In terms of processing, proteolytically cleaved in B cell lysosomes by cathepsin CTSG which degrades the major immunogenic MBP epitope and prevents the activation of MBP-specific autoreactive T cells. In terms of tissue distribution, found in both the central and the peripheral nervous system.

The protein localises to the myelin membrane. Is, with PLP, the most abundant protein component of the myelin membrane in the CNS. Has a role in both the formation and stabilization of this compact multilayer arrangement of bilayers. Each splice variant and charge isomer may have a specialized function in the assembly of an optimized, biochemically functional myelin membrane. The protein is Myelin basic protein (MBP) of Bos taurus (Bovine).